The chain runs to 394 residues: Probable purine permease 23 (394 aa).

Residues 1 to 20 (MEMTEASKHTTTHEESEHVQ) are compositionally biased toward basic and acidic residues. The interval 1-24 (MEMTEASKHTTTHEESEHVQNPEP) is disordered. Position 29 is a phosphoserine (Ser29). Transmembrane regions (helical) follow at residues 43-63 (ISVL…ILLL), 85-105 (WMQA…FFIF), 124-144 (LILL…LYAL), 152-172 (GFFM…TAII), 180-200 (WIII…PVFS), 211-231 (GIQA…LCLV), 254-274 (VLEM…VGLF), 301-321 (VGLA…VLYV), 328-348 (IVHM…FDFI), and 352-372 (FSWP…SYFY).

The protein belongs to the purine permeases (TC 2.A.7.14) family.

It localises to the membrane. The polypeptide is Probable purine permease 23 (PUP23) (Arabidopsis thaliana (Mouse-ear cress)).